Consider the following 483-residue polypeptide: Chromosomal replication initiator protein DnaA (483 aa).

A domain I, interacts with DnaA modulators region spans residues 1-71 (MKEFWQTCVS…EALAAEWYQR (71 aa)). Residues 71 to 145 (RPVQVQFELP…DAANIVYERS (75 aa)) are domain II. Residues 146-362 (RLNTDLTFEN…GALRKVLAYA (217 aa)) are domain III, AAA+ region. ATP-binding residues include glycine 190, glycine 192, lysine 193, and threonine 194. Residues 363-483 (RFHGREALNV…LHVLEQTLKG (121 aa)) are domain IV, binds dsDNA.

The protein belongs to the DnaA family. In terms of assembly, oligomerizes as a right-handed, spiral filament on DNA at oriC.

Its subcellular location is the cytoplasm. Plays an essential role in the initiation and regulation of chromosomal replication. ATP-DnaA binds to the origin of replication (oriC) to initiate formation of the DNA replication initiation complex once per cell cycle. Binds the DnaA box (a 9 base pair repeat at the origin) and separates the double-stranded (ds)DNA. Forms a right-handed helical filament on oriC DNA; dsDNA binds to the exterior of the filament while single-stranded (ss)DNA is stabiized in the filament's interior. The ATP-DnaA-oriC complex binds and stabilizes one strand of the AT-rich DNA unwinding element (DUE), permitting loading of DNA polymerase. After initiation quickly degrades to an ADP-DnaA complex that is not apt for DNA replication. Binds acidic phospholipids. The chain is Chromosomal replication initiator protein DnaA from Bordetella avium (strain 197N).